The following is a 527-amino-acid chain: G patch domain-containing protein 2 (527 aa).

Residues 35–135 (LEESSEQARG…RPSSNLSSSV (101 aa)) are disordered. A compositionally biased stretch (basic residues) spans 62-76 (RQARKRRGRKRRSYN). Basic and acidic residues predominate over residues 97 to 116 (EPSKDYREKHSNNKKDRSDS). Ser-114, Ser-116, and Ser-145 each carry phosphoserine. Disordered stretches follow at residues 175–281 (SSKR…GDDE), 350–375 (TPSK…GSNK), and 480–527 (TPGS…GNPA). Residues 186–196 (GCRDQDMDNDR) show a composition bias toward basic and acidic residues. Residues 206-215 (KKVKKRKLKG) are compositionally biased toward basic residues. Residues 231 to 257 (SEERSQPNKDRMEYEEQKASDELRSES) are compositionally biased toward basic and acidic residues. The G-patch domain maps to 466–512 (ESNIGNRMLQSMGWTPGSGLGRDGRGIAEPVQAVQRPKGLGLGFPLP). The span at 510–527 (PLPKSSPTSPAPTSGNPA) shows a compositional bias: low complexity.

In terms of assembly, interacts with DHX15.

The protein localises to the nucleus speckle. Its subcellular location is the nucleus. It is found in the nucleolus. Its function is as follows. Enhances the ATPase activity of DHX15 in vitro. This is G patch domain-containing protein 2 (Gpatch2) from Mus musculus (Mouse).